The following is a 44-amino-acid chain: Alpha-amylase inhibitor magnificamide (44 aa).

3 cysteine pairs are disulfide-bonded: cysteine 6/cysteine 38, cysteine 16/cysteine 33, and cysteine 20/cysteine 39. The interval 7–10 (YIYH) is inhibitory motif.

It belongs to the sea anemone alpha-amylase inhibitor family.

It localises to the secreted. Its function is as follows. Mammalian alpha-amylase (AMY2A) inhibitor. The recombinant peptide inhibits porcine pancreatic (Ki=0.17 nM) and human saliva alpha-amylases (Ki=7.7 nM). It does not show antimicrobial (tested on fungi and bacteria) or channel modulating activities (tested on 18 voltage-gated sodium and potassium channles). The chain is Alpha-amylase inhibitor magnificamide from Heteractis magnifica (Magnificent sea anemone).